Reading from the N-terminus, the 223-residue chain is 7-cyano-7-deazaguanine synthase (223 aa).

Residue 15 to 25 participates in ATP binding; that stretch reads FSGGQDSTTCL. Zn(2+) is bound by residues cysteine 191, cysteine 200, cysteine 203, and cysteine 206.

Belongs to the QueC family. As to quaternary structure, homodimer. The cofactor is Zn(2+).

It catalyses the reaction 7-carboxy-7-deazaguanine + NH4(+) + ATP = 7-cyano-7-deazaguanine + ADP + phosphate + H2O + H(+). It participates in purine metabolism; 7-cyano-7-deazaguanine biosynthesis. Catalyzes the ATP-dependent conversion of 7-carboxy-7-deazaguanine (CDG) to 7-cyano-7-deazaguanine (preQ(0)). The protein is 7-cyano-7-deazaguanine synthase of Staphylococcus epidermidis (strain ATCC 35984 / DSM 28319 / BCRC 17069 / CCUG 31568 / BM 3577 / RP62A).